Here is a 368-residue protein sequence, read N- to C-terminus: Germination protease (368 aa).

Positions 1–16 are excised as a propeptide; that stretch reads MKNNELDVNQFLIRTD.

It belongs to the peptidase A25 family. Homotetramer. In terms of processing, autoproteolytically processed. The inactive tetrameric zymogen termed p46 autoprocesses to a smaller form termed p41, which is active only during spore germination.

It carries out the reaction Endopeptidase action with P4 Glu or Asp, P1 preferably Glu &gt; Asp, P1' hydrophobic and P2' Ala.. In terms of biological role, initiates the rapid degradation of small, acid-soluble proteins during spore germination. This chain is Germination protease, found in Bacillus velezensis (strain DSM 23117 / BGSC 10A6 / LMG 26770 / FZB42) (Bacillus amyloliquefaciens subsp. plantarum).